The primary structure comprises 339 residues: Anthranilate phosphoribosyltransferase (339 aa).

5-phospho-alpha-D-ribose 1-diphosphate contacts are provided by residues Gly81, Gly84–Asp85, Ser89, Asn91–Ser94, Lys109–Ser117, and Ala121. An anthranilate-binding site is contributed by Gly81. Ser93 provides a ligand contact to Mg(2+). Asn112 contacts anthranilate. Position 167 (Arg167) interacts with anthranilate. Mg(2+)-binding residues include Asp225 and Glu226.

Belongs to the anthranilate phosphoribosyltransferase family. Homodimer. Mg(2+) serves as cofactor.

The enzyme catalyses N-(5-phospho-beta-D-ribosyl)anthranilate + diphosphate = 5-phospho-alpha-D-ribose 1-diphosphate + anthranilate. Its pathway is amino-acid biosynthesis; L-tryptophan biosynthesis; L-tryptophan from chorismate: step 2/5. Its function is as follows. Catalyzes the transfer of the phosphoribosyl group of 5-phosphorylribose-1-pyrophosphate (PRPP) to anthranilate to yield N-(5'-phosphoribosyl)-anthranilate (PRA). The chain is Anthranilate phosphoribosyltransferase from Brucella suis (strain ATCC 23445 / NCTC 10510).